A 552-amino-acid polypeptide reads, in one-letter code: Putative transport protein YPN_3727 (552 aa).

The next 6 membrane-spanning stretches (helical) occupy residues 1–21, 26–46, 65–85, 96–116, 119–139, and 158–178; these read MSAI…GLWI, IYGV…VGHF, FGLI…FFSS, FAIL…KLFA, LPII…LGAA, and MGYA…MWLI. RCK C-terminal domains follow at residues 192-276 and 279-361; these read AFDS…VVGE and DVTL…IVGN. A run of 6 helical transmembrane segments spans residues 371-391, 393-413, 439-459, 464-484, 493-513, and 530-550; these read MLPV…PLFV, GFPA…ALIL, IVLF…NTLV, LAWI…VGIL, YLTL…LAFA, and VYPL…VLFW.

This sequence belongs to the AAE transporter (TC 2.A.81) family. YidE subfamily.

It is found in the cell membrane. The sequence is that of Putative transport protein YPN_3727 from Yersinia pestis bv. Antiqua (strain Nepal516).